A 257-amino-acid chain; its full sequence is Diphthine synthase (257 aa).

S-adenosyl-L-methionine-binding positions include Leu-9, Asp-86, Val-89, 114–115 (SI), Leu-166, Ala-207, and His-232.

The protein belongs to the diphthine synthase family. In terms of assembly, homodimer.

The enzyme catalyses 2-[(3S)-amino-3-carboxypropyl]-L-histidyl-[translation elongation factor 2] + 3 S-adenosyl-L-methionine = diphthine-[translation elongation factor 2] + 3 S-adenosyl-L-homocysteine + 3 H(+). It participates in protein modification; peptidyl-diphthamide biosynthesis. Functionally, S-adenosyl-L-methionine-dependent methyltransferase that catalyzes the trimethylation of the amino group of the modified target histidine residue in translation elongation factor 2 (EF-2), to form an intermediate called diphthine. The three successive methylation reactions represent the second step of diphthamide biosynthesis. The sequence is that of Diphthine synthase from Methanocella arvoryzae (strain DSM 22066 / NBRC 105507 / MRE50).